Consider the following 272-residue polypeptide: Formamidopyrimidine-DNA glycosylase (272 aa).

Pro-2 serves as the catalytic Schiff-base intermediate with DNA. Glu-3 serves as the catalytic Proton donor. Lys-58 acts as the Proton donor; for beta-elimination activity in catalysis. The DNA site is built by His-91, Arg-111, and Arg-153. The FPG-type zinc finger occupies Ala-238–Ser-272. The Proton donor; for delta-elimination activity role is filled by Arg-262.

Belongs to the FPG family. In terms of assembly, monomer. The cofactor is Zn(2+).

It catalyses the reaction Hydrolysis of DNA containing ring-opened 7-methylguanine residues, releasing 2,6-diamino-4-hydroxy-5-(N-methyl)formamidopyrimidine.. The enzyme catalyses 2'-deoxyribonucleotide-(2'-deoxyribose 5'-phosphate)-2'-deoxyribonucleotide-DNA = a 3'-end 2'-deoxyribonucleotide-(2,3-dehydro-2,3-deoxyribose 5'-phosphate)-DNA + a 5'-end 5'-phospho-2'-deoxyribonucleoside-DNA + H(+). Involved in base excision repair of DNA damaged by oxidation or by mutagenic agents. Acts as a DNA glycosylase that recognizes and removes damaged bases. Has a preference for oxidized purines, such as 7,8-dihydro-8-oxoguanine (8-oxoG). Has AP (apurinic/apyrimidinic) lyase activity and introduces nicks in the DNA strand. Cleaves the DNA backbone by beta-delta elimination to generate a single-strand break at the site of the removed base with both 3'- and 5'-phosphates. The protein is Formamidopyrimidine-DNA glycosylase of Marinomonas sp. (strain MWYL1).